Reading from the N-terminus, the 368-residue chain is 3-dehydroquinate synthase (368 aa).

Residues 69–74 (DGEAYK), 103–107 (GVIGD), 127–128 (TT), K140, and K149 each bind NAD(+). The Zn(2+) site is built by E182, H245, and H262.

The protein belongs to the sugar phosphate cyclases superfamily. Dehydroquinate synthase family. NAD(+) serves as cofactor. The cofactor is Co(2+). It depends on Zn(2+) as a cofactor.

The protein localises to the cytoplasm. The catalysed reaction is 7-phospho-2-dehydro-3-deoxy-D-arabino-heptonate = 3-dehydroquinate + phosphate. The protein operates within metabolic intermediate biosynthesis; chorismate biosynthesis; chorismate from D-erythrose 4-phosphate and phosphoenolpyruvate: step 2/7. Its function is as follows. Catalyzes the conversion of 3-deoxy-D-arabino-heptulosonate 7-phosphate (DAHP) to dehydroquinate (DHQ). In Pseudomonas aeruginosa (strain ATCC 15692 / DSM 22644 / CIP 104116 / JCM 14847 / LMG 12228 / 1C / PRS 101 / PAO1), this protein is 3-dehydroquinate synthase.